The following is a 347-amino-acid chain: D-alanine--D-alanine ligase (347 aa).

In terms of domain architecture, ATP-grasp spans 131–333 (KRVLESAGIA…YPELIERLVD (203 aa)). ATP is bound at residue 161–216 (EEKLAYPVFTKPSNMGSSVGISKSENQEELRQALKLAFRYDSRVLVEQGVNAREIE). Mg(2+) contacts are provided by aspartate 287, glutamate 300, and asparagine 302.

The protein belongs to the D-alanine--D-alanine ligase family. It depends on Mg(2+) as a cofactor. Requires Mn(2+) as cofactor.

It localises to the cytoplasm. The catalysed reaction is 2 D-alanine + ATP = D-alanyl-D-alanine + ADP + phosphate + H(+). Its pathway is cell wall biogenesis; peptidoglycan biosynthesis. In terms of biological role, cell wall formation. The protein is D-alanine--D-alanine ligase of Streptococcus pneumoniae (strain JJA).